The sequence spans 1198 residues: DNA polymerase (1198 aa).

3 disordered regions span residues 1–87 (MALV…PRGT), 179–199 (LEQP…PNPP), and 904–930 (QLAL…PPSG). Composition is skewed to low complexity over residues 30-40 (QQPTRAAPAPA) and 57-68 (APPTSGGSPASP).

Belongs to the DNA polymerase type-B family. In terms of assembly, heterodimer with the terminal protein; this heterodimer binds to bp 9 to 18 of the genome. Forms a complex with viral pTP, DBP and hosts NFIA and POU2F1/OCT1 for initiation of replication.

The protein resides in the host nucleus. The catalysed reaction is DNA(n) + a 2'-deoxyribonucleoside 5'-triphosphate = DNA(n+1) + diphosphate. Functionally, eukaryotic-type DNA polymerase involved in viral genomic replication. DNA synthesis is protein primed, and acts in a strand displacement replication. Assembles in complex with viral pTP, DBP, host NFIA and host POU2F1/OCT1 on viral origin of replication. The polymerase covalently transfers dCMP onto pTP, thereby initiating complementary strand synthesis. The protein is DNA polymerase of Homo sapiens (Human).